The chain runs to 410 residues: Histone-lysine N-methyltransferase SUV39H2 (410 aa).

Residues 47–105 (YEVEYLCDYKVVKDMEYYLVKWKGWPDSTNTWEPLQNLKCPLLLQQFFNDKHNYLSQVK) enclose the Chromo domain. Residues 189-247 (FGCSCTDCFFEKCCPAEAGVLLAYNKNQQIKIPPGTPIYECNSRCQCGPDCPNRIVQKG) enclose the Pre-SET domain. Positions 191, 193, 196, 201, 202, 229, 233, 235, and 239 each coordinate Zn(2+). The 124-residue stretch at 250–373 (YSLCIFRTSN…AGEELTFDYQ (124 aa)) folds into the SET domain. S-adenosyl-L-methionine-binding positions include 261 to 263 (CGW), Tyr-304, and 330 to 331 (NH). Cys-333 is a Zn(2+) binding site. Residues Ser-381, Ser-384, and Ser-388 each carry the phosphoserine modification. Residues 394–410 (ARTVCKCGAVTCRGYLN) form the Post-SET domain. 3 residues coordinate Zn(2+): Cys-398, Cys-400, and Cys-405.

It belongs to the class V-like SAM-binding methyltransferase superfamily. Histone-lysine methyltransferase family. Suvar3-9 subfamily. In terms of assembly, interacts with SMAD5. The large PER complex involved in the histone methylation is composed of at least PER2, CBX3, TRIM28, SUV39H1 and/or SUV39H2; CBX3 mediates the formation of the complex. Ubiquitinated by the DCX(DCAF13) E3 ubiquitin ligase complex, leading to its degradation.

The protein resides in the nucleus. It is found in the chromosome. The protein localises to the centromere. It carries out the reaction L-lysyl(9)-[histone H3] + 3 S-adenosyl-L-methionine = N(6),N(6),N(6)-trimethyl-L-lysyl(9)-[histone H3] + 3 S-adenosyl-L-homocysteine + 3 H(+). Histone methyltransferase that specifically trimethylates 'Lys-9' of histone H3 using monomethylated H3 'Lys-9' as substrate. H3 'Lys-9' trimethylation represents a specific tag for epigenetic transcriptional repression by recruiting HP1 (CBX1, CBX3 and/or CBX5) proteins to methylated histones. Mainly functions in heterochromatin regions, thereby playing a central role in the establishment of constitutive heterochromatin at pericentric and telomere regions. H3 'Lys-9' trimethylation is also required to direct DNA methylation at pericentric repeats. SUV39H1 is targeted to histone H3 via its interaction with RB1 and is involved in many processes, such as cell cycle regulation, transcriptional repression and regulation of telomere length. May participate in regulation of higher-order chromatin organization during spermatogenesis. Recruited by the large PER complex to the E-box elements of the circadian target genes such as PER2 itself or PER1, contributes to the conversion of local chromatin to a heterochromatin-like repressive state through H3 'Lys-9' trimethylation. In Bos taurus (Bovine), this protein is Histone-lysine N-methyltransferase SUV39H2 (SUV39H2).